The primary structure comprises 282 residues: Bis(5'-nucleosyl)-tetraphosphatase, symmetrical (282 aa).

The protein belongs to the Ap4A hydrolase family.

It carries out the reaction P(1),P(4)-bis(5'-adenosyl) tetraphosphate + H2O = 2 ADP + 2 H(+). In terms of biological role, hydrolyzes diadenosine 5',5'''-P1,P4-tetraphosphate to yield ADP. This Escherichia fergusonii (strain ATCC 35469 / DSM 13698 / CCUG 18766 / IAM 14443 / JCM 21226 / LMG 7866 / NBRC 102419 / NCTC 12128 / CDC 0568-73) protein is Bis(5'-nucleosyl)-tetraphosphatase, symmetrical.